Here is a 1040-residue protein sequence, read N- to C-terminus: MLKTEKILHLKTQRGRSVRAVREHYLREDVRCGSALCHTCPRDGKLLSEELTHYVVPDCQVLQDYQEVLEFPELRGIIIMQTACQAVQHQRGRRQYKKLCSLLRDTRHDCILFSNEFQNHAYLPREMGESALAWQTRCIYNSCVWYYQHCQKKIPVVMVTEDESVIGKYNTETQEVYVVSFQIYLETFWPNFKGALELYKSLRDTHLERKLESRESNGKEYPEHLPLEILEAGIKSGRYKQGVLSVNKHRAQLESFVRLQGLGGKETDIQSDIFIHGTKPRNRAIHGDLVAVELLPKSEWKGRTGALCENETDEKVGDMQAEVMPTGRVVGIMQRNWRDYVVTFPAKEDTETQGKNTQKVLVMPWDYRIPKIRISTQQAEALQNYRVVVRIDSWESNSLYPNGHFVRALGRAGNLEAEIATILVENSISLNPFSEAQLAEMPSNTHENPWQVKPEEGDRLDLRETHLVFSIDPKGCEDVDDALSIRVLPSGDLELGVHIADVTHFVQHNTYTDIEARSRATTYYLADRRNDMLPLILSADLCSLLGAVDRYAVSVIWEMDCSTYEIRRVWYGRTIIRSSYKLSYEVAQQLLDGDLEPLSTEKELHPLKQDPARLQQLLWAVGKMTEVAHATRMRRNMSGALELEGVEVRVQLGEKHSIDDLVPKQPLQVHETIAECMILANHWVAKKIWESYPQHALLRLHPPPRQEFFQELKECAKARGFSIDTRSNKALADSLDQAHDPSDPLVNQLLRMMATQAMSNARYFSTGSYTEDEFYHYGLALEKYTHFTSPIRRYADIVVHRLLLAAVNKGPKDHLLGNKDLEELCRHINARNRAAQQCQKQSTELFQCMFFKDKDPDSDQRCISDAVIYGIRTNGVLLFIPRYGIKGAAYLKNTDGLVLACEEDGQCRWVHGSLQRLPAQIVVTTQEAKSFSFCLFDHVTVRIRIQSSRFHPDSIRLEIISNRPNPSQEALPSASNPQLLRTELVKEVTRTAVEAQLAVEGAAELKPVERYQEYRQTQGQSLYTMLEELWDLALLDVSGA.

One can recognise a CSD1 domain in the interval 232-310 (AGIKSGRYKQ…KGRTGALCEN (79 aa)). The region spanning 360-426 (VLVMPWDYRI…AEIATILVEN (67 aa)) is the CSD2 domain. Residues 459–808 (RLDLRETHLV…VHRLLLAAVN (350 aa)) form the RNB domain.

This sequence belongs to the RNR ribonuclease family. As to quaternary structure, component of the RNA exosome complex. It depends on Mg(2+) as a cofactor.

It localises to the cytoplasm. The catalysed reaction is Exonucleolytic cleavage in the 3'- to 5'-direction to yield nucleoside 5'-phosphates.. Functionally, catalytic component of the RNA exosome complex which has 3'-&gt;5' exoribonuclease activity and participates in a multitude of cellular RNA processing and degradation events. This is DIS3-like exonuclease 1 (dis3l) from Xenopus laevis (African clawed frog).